A 323-amino-acid polypeptide reads, in one-letter code: Leucine-rich repeat-containing protein 46 (323 aa).

LRR repeat units lie at residues 49-70, 71-92, 93-114, and 115-135; these read ELETVRLDGEGITCIGNLEKLR, NIHSLYLQSNKIQRIENLACIT, SLRFLSLARNQIRHVENLLDLQ, and YLQFLDLSENLIETLKLDELP. One can recognise an LRRCT domain in the interval 146 to 188; sequence NPCTNQEGYRKMVIGALPLLLDLDKQPILERWTSDEEDKSSDD. Thr178 carries the phosphothreonine modification. A phosphoserine mark is found at Ser179, Ser185, and Ser186. Residues 203-228 adopt a coiled-coil conformation; the sequence is RGFFKDLEQELHQHQERRQQAALTEH. Residues 249–323 form a disordered region; the sequence is MAGDCSSTAT…TKMTNKKSTK (75 aa). The segment covering 267–316 has biased composition (low complexity); the sequence is PKATSSTQTASTTKKQVSKNQKSSVQARKGALAATTSKTSQAATPSMTKM. Ser303 is modified (phosphoserine).

In terms of tissue distribution, testis-specific (at protein level).

It is found in the cell projection. The protein localises to the cilium. Its subcellular location is the flagellum. Functionally, required for normal spermatogenesis and male fertility. Plays an important role in sperm flagellum biogenesis. The protein is Leucine-rich repeat-containing protein 46 (Lrrc46) of Mus musculus (Mouse).